The following is an 807-amino-acid chain: Dynein axonemal intermediate chain 4 (807 aa).

Composition is skewed to polar residues over residues Met1–Gln11 and Pro22–Pro31. 2 disordered regions span residues Met1–Asn44 and Tyr300–Ser320. Residues Ser32–Ser43 are compositionally biased toward low complexity. The segment covering Ala308–Asp317 has biased composition (basic and acidic residues). WD repeat units follow at residues Gln493–Val533, Lys542–Asp590, Ser617–Glu657, Gly661–Ser701, Pro704–Leu743, and Asn749–Asp788.

Part of the multisubunit axonemal dynein complex formed at least of two heavy chains and a number of intermediate and light chains. Associated with axonemal dynein subunits such as, DNAH2, DNAI3, and DYNLT1. Interacts with DYNLT1. In terms of tissue distribution, highly expressed in tissues containing motile cilia, including the trachea, lung, oviduct, and testis.

It is found in the cytoplasm. The protein resides in the cytoskeleton. It localises to the flagellum axoneme. The protein localises to the cilium axoneme. Its subcellular location is the dynein axonemal particle. Its function is as follows. Plays a critical role in the assembly of axonemal dynein complex, thereby playing a role in ciliary motility. The sequence is that of Dynein axonemal intermediate chain 4 (Dnai4) from Mus musculus (Mouse).